Here is a 408-residue protein sequence, read N- to C-terminus: LL-diaminopimelate aminotransferase (408 aa).

Substrate is bound by residues Tyr15 and Gly42. Pyridoxal 5'-phosphate is bound by residues Tyr72, 108–109 (SK), Tyr132, Asn187, Tyr218, and 246–248 (SFS). Substrate contacts are provided by Lys109, Tyr132, and Asn187. Lys249 carries the N6-(pyridoxal phosphate)lysine modification. 2 residues coordinate pyridoxal 5'-phosphate: Arg257 and Asn292. Asn292 and Arg388 together coordinate substrate.

Belongs to the class-I pyridoxal-phosphate-dependent aminotransferase family. LL-diaminopimelate aminotransferase subfamily. As to quaternary structure, homodimer. Pyridoxal 5'-phosphate is required as a cofactor.

The enzyme catalyses (2S,6S)-2,6-diaminopimelate + 2-oxoglutarate = (S)-2,3,4,5-tetrahydrodipicolinate + L-glutamate + H2O + H(+). It participates in amino-acid biosynthesis; L-lysine biosynthesis via DAP pathway; LL-2,6-diaminopimelate from (S)-tetrahydrodipicolinate (aminotransferase route): step 1/1. Functionally, involved in the synthesis of meso-diaminopimelate (m-DAP or DL-DAP), required for both lysine and peptidoglycan biosynthesis. Catalyzes the direct conversion of tetrahydrodipicolinate to LL-diaminopimelate. In Leptospira biflexa serovar Patoc (strain Patoc 1 / Ames), this protein is LL-diaminopimelate aminotransferase.